A 231-amino-acid chain; its full sequence is Large ribosomal subunit protein uL5m (231 aa).

It belongs to the universal ribosomal protein uL5 family.

The protein localises to the mitochondrion. This is Large ribosomal subunit protein uL5m (RPL5) from Prototheca wickerhamii.